The primary structure comprises 214 residues: MSTKLQDHFDKITKILSGFGVEGCISYGEITFSIRDQRDIHLILKKLKKEYLFEQLTDVTAVDYLTYGQSDWQVGKVVSQTGFSRGRQQDFKTAAVDNRFEIIYQLLSMANNVRIRVKCKLKDAQIILVDSVSDLWPSANWAEREVYDMFGIYFNNHPDLRRVLTDYGFVGHPLRKDFPQTGYVEMRYDENLGRVVYEPVEIDDRVNTPRVIRN.

This sequence belongs to the complex I 30 kDa subunit family. As to quaternary structure, NDH-1 is composed of 14 different subunits. Subunits NuoB, C, D, E, F, and G constitute the peripheral sector of the complex.

The protein resides in the cell inner membrane. It carries out the reaction a quinone + NADH + 5 H(+)(in) = a quinol + NAD(+) + 4 H(+)(out). Functionally, NDH-1 shuttles electrons from NADH, via FMN and iron-sulfur (Fe-S) centers, to quinones in the respiratory chain. The immediate electron acceptor for the enzyme in this species is believed to be ubiquinone. Couples the redox reaction to proton translocation (for every two electrons transferred, four hydrogen ions are translocated across the cytoplasmic membrane), and thus conserves the redox energy in a proton gradient. The protein is NADH-quinone oxidoreductase subunit C of Francisella tularensis subsp. mediasiatica (strain FSC147).